Reading from the N-terminus, the 47-residue chain is Photosystem II reaction center protein Psb30 (47 aa).

A helical membrane pass occupies residues 19–39; sequence VIFQLLSVALIVIAGPVVIFL.

It belongs to the Psb30/Ycf12 family. As to quaternary structure, PSII is composed of 1 copy each of membrane proteins PsbA, PsbB, PsbC, PsbD, PsbE, PsbF, PsbH, PsbI, PsbJ, PsbK, PsbL, PsbM, PsbT, PsbX, PsbY, PsbZ, Psb30/Ycf12, peripheral proteins PsbO, CyanoQ (PsbQ), PsbU, PsbV and a large number of cofactors. It forms dimeric complexes.

Its subcellular location is the cellular thylakoid membrane. Its function is as follows. A core subunit of photosystem II (PSII), probably helps stabilize the reaction center. In Nostoc punctiforme (strain ATCC 29133 / PCC 73102), this protein is Photosystem II reaction center protein Psb30.